The sequence spans 193 residues: dCTP deaminase (193 aa).

DCTP contacts are provided by residues 110-115, Asp-128, 136-138, Tyr-171, Lys-178, and Gln-182; these read RSSLAR and VLE. Glu-138 serves as the catalytic Proton donor/acceptor. Positions 171 to 193 are disordered; the sequence is YHQRQDAKYHNQKGAVASRIDKD.

Belongs to the dCTP deaminase family. Homotrimer.

It catalyses the reaction dCTP + H2O + H(+) = dUTP + NH4(+). It participates in pyrimidine metabolism; dUMP biosynthesis; dUMP from dCTP (dUTP route): step 1/2. In terms of biological role, catalyzes the deamination of dCTP to dUTP. The sequence is that of dCTP deaminase from Hamiltonella defensa subsp. Acyrthosiphon pisum (strain 5AT).